The following is a 146-amino-acid chain: UPF0742 protein C1348.03 (146 aa).

A helical membrane pass occupies residues 38–60 (LTVKYCLAVKLLIYLLYCWYIYS).

Belongs to the UPF0742 family.

The protein resides in the cytoplasm. Its subcellular location is the nucleus membrane. The polypeptide is UPF0742 protein C1348.03 (Schizosaccharomyces pombe (strain 972 / ATCC 24843) (Fission yeast)).